A 351-amino-acid chain; its full sequence is uncharacterized protein (351 aa).

An N-terminal signal peptide occupies residues 1–27 (MKNKKRVLIASSLSCAILLLSAATTQA). Positions 27–71 (ANSAHKDSQDQNKKEHVDKSQQKDKRNVTNKDKNSTAPDDIGKNG) are disordered. Positions 30 to 60 (AHKDSQDQNKKEHVDKSQQKDKRNVTNKDKN) are enriched in basic and acidic residues.

This sequence belongs to the aerolysin family.

This is an uncharacterized protein from Staphylococcus aureus (strain USA300).